Consider the following 413-residue polypeptide: Probable isoleucine--tRNA ligase, mitochondrial (413 aa).

Residues 298-302 (KMSKS) carry the 'KMSKS' region motif. Lys-301 is an ATP binding site.

The protein belongs to the class-I aminoacyl-tRNA synthetase family.

It localises to the mitochondrion matrix. It carries out the reaction tRNA(Ile) + L-isoleucine + ATP = L-isoleucyl-tRNA(Ile) + AMP + diphosphate. This is Probable isoleucine--tRNA ligase, mitochondrial from Ciona intestinalis (Transparent sea squirt).